We begin with the raw amino-acid sequence, 214 residues long: Outer-membrane lipoprotein LolB (214 aa).

Residues 1–25 (MNNLKRFTKSIFSCIALSGLLFLGG) form the signal peptide. Cys26 carries N-palmitoyl cysteine lipidation. Cys26 is lipidated: S-diacylglycerol cysteine.

The protein belongs to the LolB family. In terms of assembly, monomer.

It is found in the cell outer membrane. Functionally, plays a critical role in the incorporation of lipoproteins in the outer membrane after they are released by the LolA protein. This chain is Outer-membrane lipoprotein LolB, found in Shewanella oneidensis (strain ATCC 700550 / JCM 31522 / CIP 106686 / LMG 19005 / NCIMB 14063 / MR-1).